The chain runs to 369 residues: Aminomethyltransferase (369 aa).

Belongs to the GcvT family. The glycine cleavage system is composed of four proteins: P, T, L and H.

It carries out the reaction N(6)-[(R)-S(8)-aminomethyldihydrolipoyl]-L-lysyl-[protein] + (6S)-5,6,7,8-tetrahydrofolate = N(6)-[(R)-dihydrolipoyl]-L-lysyl-[protein] + (6R)-5,10-methylene-5,6,7,8-tetrahydrofolate + NH4(+). In terms of biological role, the glycine cleavage system catalyzes the degradation of glycine. This chain is Aminomethyltransferase, found in Alkaliphilus metalliredigens (strain QYMF).